A 495-amino-acid polypeptide reads, in one-letter code: Ribose import ATP-binding protein RbsA 3 (495 aa).

ABC transporter domains follow at residues Val-5 to Glu-240 and Ala-250 to Lys-492. Gly-37–Ser-44 provides a ligand contact to ATP.

Belongs to the ABC transporter superfamily. Ribose importer (TC 3.A.1.2.1) family. As to quaternary structure, the complex is composed of an ATP-binding protein (RbsA), two transmembrane proteins (RbsC) and a solute-binding protein (RbsB).

The protein resides in the cell membrane. It catalyses the reaction D-ribose(out) + ATP + H2O = D-ribose(in) + ADP + phosphate + H(+). Part of the ABC transporter complex RbsABC involved in ribose import. Responsible for energy coupling to the transport system. This Rubrobacter xylanophilus (strain DSM 9941 / JCM 11954 / NBRC 16129 / PRD-1) protein is Ribose import ATP-binding protein RbsA 3.